Here is a 322-residue protein sequence, read N- to C-terminus: 4-diphosphocytidyl-2-C-methyl-D-erythritol kinase (322 aa).

The active site involves K25. 110–120 (PVAGGMAGGSA) is a binding site for ATP. Residue D152 is part of the active site.

It belongs to the GHMP kinase family. IspE subfamily.

The catalysed reaction is 4-CDP-2-C-methyl-D-erythritol + ATP = 4-CDP-2-C-methyl-D-erythritol 2-phosphate + ADP + H(+). It participates in isoprenoid biosynthesis; isopentenyl diphosphate biosynthesis via DXP pathway; isopentenyl diphosphate from 1-deoxy-D-xylulose 5-phosphate: step 3/6. Its function is as follows. Catalyzes the phosphorylation of the position 2 hydroxy group of 4-diphosphocytidyl-2C-methyl-D-erythritol. The protein is 4-diphosphocytidyl-2-C-methyl-D-erythritol kinase of Mycolicibacterium gilvum (strain PYR-GCK) (Mycobacterium gilvum (strain PYR-GCK)).